A 351-amino-acid polypeptide reads, in one-letter code: N-acetyl-gamma-glutamyl-phosphate reductase (351 aa).

Residue cysteine 154 is part of the active site.

The protein belongs to the NAGSA dehydrogenase family. Type 1 subfamily.

It localises to the cytoplasm. The enzyme catalyses N-acetyl-L-glutamate 5-semialdehyde + phosphate + NADP(+) = N-acetyl-L-glutamyl 5-phosphate + NADPH + H(+). It functions in the pathway amino-acid biosynthesis; L-arginine biosynthesis; N(2)-acetyl-L-ornithine from L-glutamate: step 3/4. Catalyzes the NADPH-dependent reduction of N-acetyl-5-glutamyl phosphate to yield N-acetyl-L-glutamate 5-semialdehyde. This Prochlorococcus marinus (strain AS9601) protein is N-acetyl-gamma-glutamyl-phosphate reductase.